A 708-amino-acid polypeptide reads, in one-letter code: ATP-dependent DNA helicase Hel308 (708 aa).

The Q motif motif lies at 1–29 (MSIDDLKLPSNVIDIIKNRGIKKLNPPQT). Residues Q28 and 46–53 (SPTGSGKT) contribute to the ATP site. A Helicase ATP-binding domain is found at 33-196 (KKGLLDGNRL…WLGAEPVATN (164 aa)). Residues 145–148 (DELH) carry the DEAH box motif. Residues 229–435 (HGDDAIIAYT…ERAFYTFLLG (207 aa)) enclose the Helicase C-terminal domain.

Belongs to the helicase family. Hel308 subfamily. Monomer.

It carries out the reaction Couples ATP hydrolysis with the unwinding of duplex DNA by translocating in the 3'-5' direction.. It catalyses the reaction ATP + H2O = ADP + phosphate + H(+). Its function is as follows. DNA-dependent ATPase and 3'-5' DNA helicase that may be involved in repair of stalled replication forks. The protein is ATP-dependent DNA helicase Hel308 of Saccharolobus solfataricus (strain ATCC 35092 / DSM 1617 / JCM 11322 / P2) (Sulfolobus solfataricus).